The sequence spans 279 residues: NADPH-dependent 7-cyano-7-deazaguanine reductase (279 aa).

86–88 (IES) is a substrate binding site. 88–89 (SK) lines the NADPH pocket. Residue Cys-187 is the Thioimide intermediate of the active site. Asp-194 acts as the Proton donor in catalysis. 226–227 (HE) lines the substrate pocket. 255-256 (RG) provides a ligand contact to NADPH.

It belongs to the GTP cyclohydrolase I family. QueF type 2 subfamily. As to quaternary structure, homodimer.

It localises to the cytoplasm. The catalysed reaction is 7-aminomethyl-7-carbaguanine + 2 NADP(+) = 7-cyano-7-deazaguanine + 2 NADPH + 3 H(+). Its pathway is tRNA modification; tRNA-queuosine biosynthesis. In terms of biological role, catalyzes the NADPH-dependent reduction of 7-cyano-7-deazaguanine (preQ0) to 7-aminomethyl-7-deazaguanine (preQ1). The sequence is that of NADPH-dependent 7-cyano-7-deazaguanine reductase from Haemophilus influenzae (strain ATCC 51907 / DSM 11121 / KW20 / Rd).